Here is a 197-residue protein sequence, read N- to C-terminus: Phosphoheptose isomerase (197 aa).

The 162-residue stretch at leucine 36 to glutamate 197 folds into the SIS domain. Position 51–53 (asparagine 51–glycine 53) interacts with substrate. Residues histidine 60 and glutamate 64 each contribute to the Zn(2+) site. Residues glutamate 64, asparagine 93–aspartate 94, serine 119–serine 121, serine 124, and glutamine 174 contribute to the substrate site. Zn(2+) is bound by residues glutamine 174 and histidine 182.

It belongs to the SIS family. GmhA subfamily. In terms of assembly, homotetramer. The cofactor is Zn(2+).

Its subcellular location is the cytoplasm. The catalysed reaction is 2 D-sedoheptulose 7-phosphate = D-glycero-alpha-D-manno-heptose 7-phosphate + D-glycero-beta-D-manno-heptose 7-phosphate. It participates in carbohydrate biosynthesis; D-glycero-D-manno-heptose 7-phosphate biosynthesis; D-glycero-alpha-D-manno-heptose 7-phosphate and D-glycero-beta-D-manno-heptose 7-phosphate from sedoheptulose 7-phosphate: step 1/1. Its function is as follows. Catalyzes the isomerization of sedoheptulose 7-phosphate in D-glycero-D-manno-heptose 7-phosphate. The sequence is that of Phosphoheptose isomerase from Bordetella avium (strain 197N).